Consider the following 619-residue polypeptide: ETS-related transcription factor Elf-1 (619 aa).

Serine 110, serine 163, serine 167, and serine 168 each carry phosphoserine. Positions 158-199 (EKYADSPGASSPEQPKRKKGRKTKPPRPDSPATTPNISVKKK) are disordered. Residues 173 to 182 (KRKKGRKTKP) are compositionally biased toward basic residues. Serine 187 bears the Phosphoserine mark. Position 190 is a phosphothreonine (threonine 190). A DNA-binding region (ETS) is located at residues 208 to 290 (IYLWEFLLAL…EGQRLVYQFK (83 aa)). The interval 300–366 (NDEDPSSSIE…DPVEVAQPSE (67 aa)) is disordered. A compositionally biased stretch (low complexity) spans 305–321 (SSSIESSDPSLSSSATS). Residues 322–335 (NRNQTSRSRVSSSP) show a composition bias toward polar residues. Serine 432 is modified (phosphoserine). The disordered stretch occupies residues 564 to 592 (TLTQEVEKKESEDHLKENTEKTEQQPQPY). Positions 568–586 (EVEKKESEDHLKENTEKTE) are enriched in basic and acidic residues.

The protein belongs to the ETS family. In terms of assembly, binds to the underphosphorylated form of RB. May interact with other transcription factors in order to regulate specific genes. Interacts with RUNX1. As to expression, in fetal tissues, it is highly expressed in heart, lung liver and kidney, and weakly expressed in brain. In adult, it is highly expressed in pancreas, spleen, thymus and peripheral blood leukocytes, expressed at moderate levels in heart, placenta, lung, liver, skeletal muscle, kidney, prostate, ovary, small intestine and colon, and weakly expressed in brain and testis.

It is found in the nucleus. In terms of biological role, transcription factor that activates the LYN and BLK promoters. Appears to be required for the T-cell-receptor-mediated trans activation of HIV-2 gene expression. Binds specifically to two purine-rich motifs in the HIV-2 enhancer. This chain is ETS-related transcription factor Elf-1 (ELF1), found in Homo sapiens (Human).